Here is a 122-residue protein sequence, read N- to C-terminus: S-protein homolog 23 (122 aa).

Positions methionine 1–serine 20 are cleaved as a signal peptide. The N-linked (GlcNAc...) asparagine glycan is linked to asparagine 86.

It belongs to the plant self-incompatibility (S1) protein family.

The protein resides in the secreted. In Arabidopsis thaliana (Mouse-ear cress), this protein is S-protein homolog 23.